The chain runs to 280 residues: Phosphatidylserine decarboxylase proenzyme (280 aa).

Residues aspartate 88, histidine 144, and serine 247 each act as charge relay system; for autoendoproteolytic cleavage activity in the active site. The active-site Schiff-base intermediate with substrate; via pyruvic acid; for decarboxylase activity is serine 247. Pyruvic acid (Ser); by autocatalysis is present on serine 247.

This sequence belongs to the phosphatidylserine decarboxylase family. PSD-B subfamily. Prokaryotic type I sub-subfamily. As to quaternary structure, heterodimer of a large membrane-associated beta subunit and a small pyruvoyl-containing alpha subunit. Pyruvate serves as cofactor. In terms of processing, is synthesized initially as an inactive proenzyme. Formation of the active enzyme involves a self-maturation process in which the active site pyruvoyl group is generated from an internal serine residue via an autocatalytic post-translational modification. Two non-identical subunits are generated from the proenzyme in this reaction, and the pyruvate is formed at the N-terminus of the alpha chain, which is derived from the carboxyl end of the proenzyme. The autoendoproteolytic cleavage occurs by a canonical serine protease mechanism, in which the side chain hydroxyl group of the serine supplies its oxygen atom to form the C-terminus of the beta chain, while the remainder of the serine residue undergoes an oxidative deamination to produce ammonia and the pyruvoyl prosthetic group on the alpha chain. During this reaction, the Ser that is part of the protease active site of the proenzyme becomes the pyruvoyl prosthetic group, which constitutes an essential element of the active site of the mature decarboxylase.

The protein localises to the cell membrane. The catalysed reaction is a 1,2-diacyl-sn-glycero-3-phospho-L-serine + H(+) = a 1,2-diacyl-sn-glycero-3-phosphoethanolamine + CO2. It participates in phospholipid metabolism; phosphatidylethanolamine biosynthesis; phosphatidylethanolamine from CDP-diacylglycerol: step 2/2. Functionally, catalyzes the formation of phosphatidylethanolamine (PtdEtn) from phosphatidylserine (PtdSer). The protein is Phosphatidylserine decarboxylase proenzyme of Xanthomonas axonopodis pv. citri (strain 306).